Here is a 260-residue protein sequence, read N- to C-terminus: Fibronectin type III domain-containing protein 5 (260 aa).

The disordered stretch occupies residues 1 to 56 (MQAARGGAGRPERPGRPGRGPERERERPPGAGAASPCAAPGLPAGGATIHPGSPSA). Basic and acidic residues predominate over residues 10–28 (RPERPGRPGRGPERERERP). A compositionally biased stretch (low complexity) spans 29–56 (PGAGAASPCAAPGLPAGGATIHPGSPSA). The region spanning 84-175 (APVNVTVRHL…EPVLFKTPRE (92 aa)) is the Fibronectin type-III domain. Residues Asn-87 and Asn-132 are each glycosylated (N-linked (GlcNAc...) asparagine). A helical membrane pass occupies residues 201 to 221 (GEVLIIVVVLFMWAGVIALFC). Over residues 230–241 (NEPNNNKEKTKS) the composition is skewed to basic and acidic residues. The disordered stretch occupies residues 230-260 (NEPNNNKEKTKSASETSTPEHQGGGLLRSKI). The segment covering 251-260 (QGGGLLRSKI) has biased composition (gly residues). The short motif at 258–260 (SKI) is the Microbody targeting signal element.

As to quaternary structure, dimer; may exist in other oligomeric forms. The extracellular domain is cleaved and released from the cell membrane. In terms of processing, N-Glycosylated. As to expression, widely expressed, with highest levels in heart. Very low expression, if any, in colon, pancreas and spleen.

The protein resides in the cell membrane. It localises to the peroxisome membrane. It is found in the secreted. In terms of biological role, mediates beneficial effects of muscular exercise. Induces browning of white adipose tissue by stimulating UCP1 expression, at least in part, via the nuclear receptor PPARA. In Homo sapiens (Human), this protein is Fibronectin type III domain-containing protein 5 (FNDC5).